The chain runs to 72 residues: uncharacterized protein (72 aa).

Residues 41–58 (FSFLVHIMCGLTLTSYVI) form a helical membrane-spanning segment.

The protein localises to the membrane. This is an uncharacterized protein from Dictyostelium discoideum (Social amoeba).